Here is a 300-residue protein sequence, read N- to C-terminus: Putative heme-binding peroxidase (300 aa).

Catalysis depends on His39, which acts as the Proton acceptor. Disordered stretches follow at residues 44 to 64 (YDKSTDTGGSNGAGMRYEAEG) and 116 to 135 (GRTDFADDSRVPPRGRLPDA). Residues 116-126 (GRTDFADDSRV) show a composition bias toward basic and acidic residues. A heme b-binding site is contributed by His163. The active-site Tryptophan radical intermediate is Trp179.

The protein belongs to the peroxidase family. Cytochrome c peroxidase subfamily. Heme b is required as a cofactor.

Its function is as follows. Destroys radicals which are normally produced within the cells and which are toxic to biological systems. The sequence is that of Putative heme-binding peroxidase from Pyricularia oryzae (strain 70-15 / ATCC MYA-4617 / FGSC 8958) (Rice blast fungus).